The chain runs to 127 residues: Glycine cleavage system H protein 1 (127 aa).

The 82-residue stretch at 20–101 folds into the Lipoyl-binding domain; sequence SVTVGITPYA…LGAGWFFRFI (82 aa). N6-lipoyllysine is present on lysine 60.

The protein belongs to the GcvH family. In terms of assembly, the glycine cleavage system is composed of four proteins: P, T, L and H. Requires (R)-lipoate as cofactor.

Functionally, the glycine cleavage system catalyzes the degradation of glycine. The H protein shuttles the methylamine group of glycine from the P protein to the T protein. In Pseudomonas syringae pv. tomato (strain ATCC BAA-871 / DC3000), this protein is Glycine cleavage system H protein 1.